The primary structure comprises 695 residues: Nucleoprotein (695 aa).

Coiled coils occupy residues 316–341 (VNVG…RRHE) and 372–400 (QTLA…EDQG). 2 disordered regions span residues 426–458 (RSIN…SFVD) and 472–611 (TLEN…EDTR). Positions 474–484 (ENSVMAPSTTL) are enriched in polar residues. Over residues 502 to 516 (ISQKKQGNESTDPAR) the composition is skewed to basic and acidic residues. Residues 529–547 (QEDDESEYTTDSQESDDQP) show a composition bias toward acidic residues. A PTAP/PSAP motif motif is present at residues 603–606 (PSAP).

It belongs to the filoviruses nucleoprotein family. In terms of assembly, homooligomer. Homomultimerizes to form the nucleocapsid. Binds to viral genomic RNA. Interacts with VP35 and VP30 to form the nucleocapsid. Also interacts with VP24 and VP40. Phosphorylated.

The protein resides in the virion. Its subcellular location is the host cytoplasm. Its function is as follows. Encapsidates the genome, protecting it from nucleases. The encapsidated genomic RNA is termed the nucleocapsid and serves as template for transcription and replication. During replication, encapsidation by NP is coupled to RNA synthesis and all replicative products are resistant to nucleases. The protein is Nucleoprotein (NP) of Lake Victoria marburgvirus (strain Ravn-87) (MARV).